We begin with the raw amino-acid sequence, 255 residues long: Small ribosomal subunit protein uS2 (255 aa).

Belongs to the universal ribosomal protein uS2 family.

The protein is Small ribosomal subunit protein uS2 of Streptococcus pyogenes serotype M3 (strain ATCC BAA-595 / MGAS315).